Consider the following 177-residue polypeptide: Large ribosomal subunit protein uL6 (177 aa).

Basic and acidic residues predominate over residues 152–171; it reads RPPEPYKGKGVRYDDEEVRR. A disordered region spans residues 152–177; it reads RPPEPYKGKGVRYDDEEVRRKEAKKK.

The protein belongs to the universal ribosomal protein uL6 family. In terms of assembly, part of the 50S ribosomal subunit.

Its function is as follows. This protein binds to the 23S rRNA, and is important in its secondary structure. It is located near the subunit interface in the base of the L7/L12 stalk, and near the tRNA binding site of the peptidyltransferase center. This Shewanella sp. (strain ANA-3) protein is Large ribosomal subunit protein uL6.